Here is a 91-residue protein sequence, read N- to C-terminus: Na(+)/H(+) antiporter subunit F (91 aa).

The next 3 membrane-spanning stretches (helical) occupy residues 5 to 27 (ILMI…TLIG), 34 to 53 (IVAL…VIMM), and 63 to 82 (VVLV…SKFI).

Belongs to the CPA3 antiporters (TC 2.A.63) subunit F family. Forms a heterooligomeric complex that consists of seven subunits: MrpA, MrpB, MrpC, MrpD, MrpE, MrpF and MrpG.

It localises to the cell membrane. In terms of biological role, mnh complex is a Na(+)Li(+)/H(+) antiporter involved in Na(+) and/or Li(+) excretion and Na(+) resistance. Na(+)/H(+) antiport consumes a transmembrane electrical potential, and is thus inferred to be electrogenic. Does not transport K(+), Ca(2+) or Mg(2+). The sequence is that of Na(+)/H(+) antiporter subunit F (mrpF) from Alkalihalophilus pseudofirmus (strain ATCC BAA-2126 / JCM 17055 / OF4) (Bacillus pseudofirmus).